Consider the following 829-residue polypeptide: DNA ligase (829 aa).

NAD(+) contacts are provided by residues 38–42 (DAEYD), 87–88 (SL), and Glu127. Lys129 functions as the N6-AMP-lysine intermediate in the catalytic mechanism. NAD(+) is bound by residues Arg150, Glu187, Lys305, and Lys329. Positions 455, 458, 473, and 479 each coordinate Zn(2+). Residues 534–564 (ETADKGSSENENGDAETVSGDLSKYNTQNGK) are disordered. The BRCT domain maps to 752–829 (GINKAVAGKT…SEAELLTLLC (78 aa)).

The protein belongs to the NAD-dependent DNA ligase family. LigA subfamily. It depends on Mg(2+) as a cofactor. Requires Mn(2+) as cofactor.

It carries out the reaction NAD(+) + (deoxyribonucleotide)n-3'-hydroxyl + 5'-phospho-(deoxyribonucleotide)m = (deoxyribonucleotide)n+m + AMP + beta-nicotinamide D-nucleotide.. In terms of biological role, DNA ligase that catalyzes the formation of phosphodiester linkages between 5'-phosphoryl and 3'-hydroxyl groups in double-stranded DNA using NAD as a coenzyme and as the energy source for the reaction. It is essential for DNA replication and repair of damaged DNA. This is DNA ligase from Neisseria gonorrhoeae (strain ATCC 700825 / FA 1090).